Reading from the N-terminus, the 41-residue chain is Cytochrome b559 subunit beta (41 aa).

Residues 16 to 32 (WLAIHALAVPTVFFLGS) form a helical membrane-spanning segment. His20 is a heme binding site.

The protein belongs to the PsbE/PsbF family. As to quaternary structure, heterodimer of an alpha subunit and a beta subunit. PSII is composed of 1 copy each of membrane proteins PsbA, PsbB, PsbC, PsbD, PsbE, PsbF, PsbH, PsbI, PsbJ, PsbK, PsbL, PsbM, PsbT, PsbX, PsbY, PsbZ, Psb30/Ycf12, at least 3 peripheral proteins of the oxygen-evolving complex and a large number of cofactors. It forms dimeric complexes. It depends on heme b as a cofactor.

It localises to the plastid. It is found in the chloroplast thylakoid membrane. Its function is as follows. This b-type cytochrome is tightly associated with the reaction center of photosystem II (PSII). PSII is a light-driven water:plastoquinone oxidoreductase that uses light energy to abstract electrons from H(2)O, generating O(2) and a proton gradient subsequently used for ATP formation. It consists of a core antenna complex that captures photons, and an electron transfer chain that converts photonic excitation into a charge separation. The protein is Cytochrome b559 subunit beta of Oltmannsiellopsis viridis (Marine flagellate).